The following is a 273-amino-acid chain: Kit ligand (273 aa).

Positions 1–25 are cleaved as a signal peptide; sequence MKKTQTWILTCIYLQLLLFNPLVKT. Topologically, residues 26–214 are extracellular; sequence EGICRNRVTN…KNPPGDSSLH (189 aa). Disulfide bonds link cysteine 29–cysteine 114 and cysteine 68–cysteine 163. Asparagine 90 and asparagine 118 each carry an N-linked (GlcNAc...) asparagine; partial glycan. A glycan (N-linked (GlcNAc...) asparagine) is linked at asparagine 145. A glycan (O-linked (GalNAc...) serine) is linked at serine 167. Threonine 168 and threonine 180 each carry an O-linked (GalNAc...) threonine glycan. N-linked (GlcNAc...) asparagine glycosylation is present at asparagine 195. The chain crosses the membrane as a helical span at residues 215–237; that stretch reads WAAMALPALFSLIIGFAFGALYW. Residues 238–273 are Cytoplasmic-facing; it reads KKRQPSLTRAVENIQINEEDNEISMLQEKEREFQEV.

The protein belongs to the SCF family. In terms of assembly, homodimer, non-covalently linked. Heterotetramer with KIT, binding two KIT molecules; thereby mediates KIT dimerization and subsequent activation by autophosphorylation. Post-translationally, a soluble form (sKITLG) is produced by proteolytic processing of isoform 1 in the extracellular domain. Found in two differentially glycosylated forms, LMW-SCF and HMW-SCF. LMW-SCF is fully N-glycosylated at Asn-145, partially N-glycosylated at Asn-90, O-glycosylated at Ser-167, Thr-168 and Thr-180, and not glycosylated at Asn-97 or Asn-118. HMW-SCF is N-glycosylated at Asn-118, Asn-90 and Asn-145, O-glycosylated at Ser-167, Thr-168 and Thr-180, and not glycosylated at Asn-97. In terms of processing, a soluble form exists as a cleavage product of the extracellular domain.

It is found in the cell membrane. Its subcellular location is the cytoplasm. It localises to the cytoskeleton. The protein resides in the cell projection. The protein localises to the lamellipodium. It is found in the filopodium. Its subcellular location is the secreted. Its function is as follows. Ligand for the receptor-type protein-tyrosine kinase KIT. Plays an essential role in the regulation of cell survival and proliferation, hematopoiesis, stem cell maintenance, gametogenesis, mast cell development, migration and function, and in melanogenesis. KITLG/SCF binding can activate several signaling pathways. Promotes phosphorylation of PIK3R1, the regulatory subunit of phosphatidylinositol 3-kinase, and subsequent activation of the kinase AKT1. KITLG/SCF and KIT also transmit signals via GRB2 and activation of RAS, RAF1 and the MAP kinases MAPK1/ERK2 and/or MAPK3/ERK1. KITLG/SCF and KIT promote activation of STAT family members STAT1, STAT3 and STAT5. KITLG/SCF and KIT promote activation of PLCG1, leading to the production of the cellular signaling molecules diacylglycerol and inositol 1,4,5-trisphosphate. KITLG/SCF acts synergistically with other cytokines, probably interleukins. The polypeptide is Kit ligand (Homo sapiens (Human)).